A 276-amino-acid polypeptide reads, in one-letter code: Light-independent protochlorophyllide reductase iron-sulfur ATP-binding protein (276 aa).

ATP is bound by residues 12–17 (GIGKST) and K41. A Mg(2+)-binding site is contributed by S16. Residues C97 and C131 each coordinate [4Fe-4S] cluster. 182–183 (NR) contributes to the ATP binding site.

The protein belongs to the NifH/BchL/ChlL family. Homodimer. Protochlorophyllide reductase is composed of three subunits; BchL, BchN and BchB. [4Fe-4S] cluster serves as cofactor.

It carries out the reaction chlorophyllide a + oxidized 2[4Fe-4S]-[ferredoxin] + 2 ADP + 2 phosphate = protochlorophyllide a + reduced 2[4Fe-4S]-[ferredoxin] + 2 ATP + 2 H2O. Its pathway is porphyrin-containing compound metabolism; bacteriochlorophyll biosynthesis (light-independent). Its function is as follows. Component of the dark-operative protochlorophyllide reductase (DPOR) that uses Mg-ATP and reduced ferredoxin to reduce ring D of protochlorophyllide (Pchlide) to form chlorophyllide a (Chlide). This reaction is light-independent. The L component serves as a unique electron donor to the NB-component of the complex, and binds Mg-ATP. The sequence is that of Light-independent protochlorophyllide reductase iron-sulfur ATP-binding protein from Chlorobaculum tepidum (strain ATCC 49652 / DSM 12025 / NBRC 103806 / TLS) (Chlorobium tepidum).